The following is a 300-amino-acid chain: MKQYLITGGTGMVGSQLVNEIKKSDSHITILTRHDQISNDKKISYVNWAKSGWEHKVPQNIDVVINLAGATLNKRWTPEYKQTLMLSRIQSTQALYELFKSRNKAPKVLFNASATGYYPPDLFMSYTEVYKTLPFDFLSDIVYQWERFAQQFEQLGTRVVIGRFGIILSNEGGALQTMKLPYEYYIGGKLGSGQQWYSWIHINDLIQAILFLINNESASGPFNLTAPIPERQNLFGYTLARAMHKPHETWAPSLAMRLILGQMSTVVLDTQKVLPNKIQALGFQFKYSNLKIALEDLISK.

The protein belongs to the NAD(P)-dependent epimerase/dehydratase family. SDR39U1 subfamily.

The protein is Epimerase family protein SAB0724c of Staphylococcus aureus (strain bovine RF122 / ET3-1).